The following is a 271-amino-acid chain: uncharacterized protein (271 aa).

This is an uncharacterized protein from Escherichia coli (strain K12).